A 370-amino-acid chain; its full sequence is 3-isopropylmalate dehydrogenase (370 aa).

77 to 90 (GPKWDSVPYEVRPE) is a binding site for NAD(+). R97, R107, R135, and D226 together coordinate substrate. Residues D226, D250, and D254 each contribute to the Mg(2+) site. An NAD(+)-binding site is contributed by 290–302 (GSAPDIAGKGIAN).

Belongs to the isocitrate and isopropylmalate dehydrogenases family. LeuB type 1 subfamily. In terms of assembly, homodimer. The cofactor is Mg(2+). Mn(2+) serves as cofactor.

The protein resides in the cytoplasm. The catalysed reaction is (2R,3S)-3-isopropylmalate + NAD(+) = 4-methyl-2-oxopentanoate + CO2 + NADH. The protein operates within amino-acid biosynthesis; L-leucine biosynthesis; L-leucine from 3-methyl-2-oxobutanoate: step 3/4. Functionally, catalyzes the oxidation of 3-carboxy-2-hydroxy-4-methylpentanoate (3-isopropylmalate) to 3-carboxy-4-methyl-2-oxopentanoate. The product decarboxylates to 4-methyl-2 oxopentanoate. The chain is 3-isopropylmalate dehydrogenase from Brucella abortus (strain 2308).